A 311-amino-acid chain; its full sequence is MALPILLDCDPGHDDAIAIVLALASPELDVKAITSSAGNQTPEKTLRNVLRMLTLLNRTDIPVAGGAVKPLMRELIIADNVHGESGLDGPALPEPTFAPQNCTAVELMAKTLRESAEPVTIVSTGPQTNVALLLNSHPELHSKIARIVIMGGAMGLGNWTPAAEFNIYVDPEAAEIVFQSGIPVVMAGLDVTHKAQIHVEDTERFRAIGNPVSTIVAELLDFFLEYHKDEKWGFVGAPLHDPCTIAWLLKPELFTTVERWVGVETQGKYSQGMTVVDYYYLTGNKPNATVMVDVDRQGFVDLLADRLKFYA.

His-240 is an active-site residue.

It belongs to the IUNH family. RihA subfamily.

Its function is as follows. Hydrolyzes with equal efficiency cytidine or uridine to ribose and cytosine or uracil, respectively. The chain is Pyrimidine-specific ribonucleoside hydrolase RihA from Escherichia coli O8 (strain IAI1).